Here is a 293-residue protein sequence, read N- to C-terminus: Diaminopimelate epimerase (293 aa).

2 residues coordinate substrate: N11 and N78. The active-site Proton donor is C87. Substrate is bound by residues 88-89 (GN), N166, N202, and 220-221 (ER). The active-site Proton acceptor is C229. A substrate-binding site is contributed by 230 to 231 (GT).

This sequence belongs to the diaminopimelate epimerase family. As to quaternary structure, homodimer.

The protein localises to the cytoplasm. It carries out the reaction (2S,6S)-2,6-diaminopimelate = meso-2,6-diaminopimelate. Its pathway is amino-acid biosynthesis; L-lysine biosynthesis via DAP pathway; DL-2,6-diaminopimelate from LL-2,6-diaminopimelate: step 1/1. Functionally, catalyzes the stereoinversion of LL-2,6-diaminopimelate (L,L-DAP) to meso-diaminopimelate (meso-DAP), a precursor of L-lysine and an essential component of the bacterial peptidoglycan. This Mycobacterium sp. (strain JLS) protein is Diaminopimelate epimerase.